The primary structure comprises 888 residues: Villin-like protein quail (888 aa).

Residues Gly-307–Lys-366 form a Gelsolin-like repeat. One can recognise an HP domain in the interval Phe-823–Phe-888.

The protein belongs to the villin/gelsolin family. In terms of tissue distribution, germline specific in adult flies.

Its function is as follows. Required for the formation of cytoplasmic actin filament bundles in nurse cells, possibly by regulating both the polymerization and organization of actin filaments. Mutations in quail result in female sterility due to the disruption of cytoplasmic transport from the nurse cells into the oocyte late in oogenesis. In Drosophila melanogaster (Fruit fly), this protein is Villin-like protein quail (qua).